The following is a 72-amino-acid chain: uncharacterized protein (72 aa).

A helical transmembrane segment spans residues 46 to 66 (AIFVFNLCFIPNLCVACIFNV).

The protein localises to the membrane. This is an uncharacterized protein from Saccharomyces cerevisiae (strain ATCC 204508 / S288c) (Baker's yeast).